We begin with the raw amino-acid sequence, 450 residues long: MSIHMFPSDFKWGVATAAYQIEGAYNEDGRGMSIWDTFAHTPGKVKNGDNGNVACDSYHRVEEDVQLLKDLGVKVYRFSISWPRVLPQGTGEVNRAGLDYYHRLVDELLANGIEPFCTLYHWDLPQALQDQGGWGSRITIDAFAEYAELMFKELGGKIKQWITFNEPWCMAFLSNYLGVHAPGNKDLQLAIDVSHHLLVAHGRAVTLFRELGISGEIGIAPNTSWAVPYRRTKEDMEACLRVNGWSGDWYLDPIYFGEYPKFMLDWYENLGYKPPIVDGDMELIHQPIDFIGINYYTSSMNRYNPGEAGGMLSSEAISMGAPKTDIGWEIYAEGLYDLLRYTADKYGNPTLYITENGACYNDGLSLDGRIHDQRRIDYLAMHLIQASRAIEDGINLKGYMEWSLMDNFEWAEGYGMRFGLVHVDYDTLVRTPKDSFYWYKGVISRGWLDL.

Glutamate 166 functions as the Proton donor in the catalytic mechanism. Glutamate 355 acts as the Nucleophile in catalysis.

Belongs to the glycosyl hydrolase 1 family.

The catalysed reaction is Hydrolysis of terminal, non-reducing beta-D-glucosyl residues with release of beta-D-glucose.. This chain is Beta-glucosidase (bglA), found in Niallia circulans (Bacillus circulans).